The primary structure comprises 95 residues: Large ribosomal subunit protein uL23 (95 aa).

It belongs to the universal ribosomal protein uL23 family. As to quaternary structure, part of the 50S ribosomal subunit. Contacts protein L29, and trigger factor when it is bound to the ribosome.

In terms of biological role, one of the early assembly proteins it binds 23S rRNA. One of the proteins that surrounds the polypeptide exit tunnel on the outside of the ribosome. Forms the main docking site for trigger factor binding to the ribosome. This is Large ribosomal subunit protein uL23 from Leuconostoc mesenteroides subsp. mesenteroides (strain ATCC 8293 / DSM 20343 / BCRC 11652 / CCM 1803 / JCM 6124 / NCDO 523 / NBRC 100496 / NCIMB 8023 / NCTC 12954 / NRRL B-1118 / 37Y).